The primary structure comprises 385 residues: Protein GOLM2 (385 aa).

At 1-12 the chain is on the cytoplasmic side; the sequence is MVGFGAPRRTGR. Residues 13–33 traverse the membrane as a helical; Signal-anchor for type II membrane protein segment; it reads LPPFVLVALLAVIGLLAFNYW. The Lumenal segment spans residues 34–385; that stretch reads SVSARQAALH…YHKDHLNETL (352 aa). Positions 44 to 193 form a coiled coil; it reads DELLGLQAQV…KEELDKQPQK (150 aa). The disordered stretch occupies residues 169-385; it reads LAERKREYEE…YHKDHLNETL (217 aa). Basic and acidic residues-rich tracts occupy residues 170–193 and 211–220; these read AERK…QPQK and EVKEKIEDPS. Residues 265–283 show a composition bias toward polar residues; the sequence is LPSQSKSLLEKQPSLQPLS. The span at 285-299 shows a compositional bias: basic and acidic residues; it reads TEHEVKKPLPDKKET. A compositionally biased stretch (acidic residues) spans 356 to 367; it reads NGDDGNVEDDDH. Residues 368–385 show a composition bias toward basic and acidic residues; sequence DGQADAGEYHKDHLNETL.

This sequence belongs to the GOLM family.

Its subcellular location is the membrane. The sequence is that of Protein GOLM2 (golm2) from Xenopus laevis (African clawed frog).